Consider the following 239-residue polypeptide: Pyridoxine 5'-phosphate synthase (239 aa).

N7 lines the 3-amino-2-oxopropyl phosphate pocket. 9-10 serves as a coordination point for 1-deoxy-D-xylulose 5-phosphate; it reads DH. Residue R18 coordinates 3-amino-2-oxopropyl phosphate. The active-site Proton acceptor is H43. 2 residues coordinate 1-deoxy-D-xylulose 5-phosphate: R45 and H50. E70 acts as the Proton acceptor in catalysis. 1-deoxy-D-xylulose 5-phosphate is bound at residue T100. H191 acts as the Proton donor in catalysis. 3-amino-2-oxopropyl phosphate-binding positions include G192 and 213-214; that span reads GH.

Belongs to the PNP synthase family. Homooctamer; tetramer of dimers.

The protein resides in the cytoplasm. It catalyses the reaction 3-amino-2-oxopropyl phosphate + 1-deoxy-D-xylulose 5-phosphate = pyridoxine 5'-phosphate + phosphate + 2 H2O + H(+). It functions in the pathway cofactor biosynthesis; pyridoxine 5'-phosphate biosynthesis; pyridoxine 5'-phosphate from D-erythrose 4-phosphate: step 5/5. Its function is as follows. Catalyzes the complicated ring closure reaction between the two acyclic compounds 1-deoxy-D-xylulose-5-phosphate (DXP) and 3-amino-2-oxopropyl phosphate (1-amino-acetone-3-phosphate or AAP) to form pyridoxine 5'-phosphate (PNP) and inorganic phosphate. The protein is Pyridoxine 5'-phosphate synthase of Geotalea uraniireducens (strain Rf4) (Geobacter uraniireducens).